Reading from the N-terminus, the 363-residue chain is Serpentine receptor class beta-18 (363 aa).

The next 7 membrane-spanning stretches (helical) occupy residues 52-72, 92-112, 135-155, 172-192, 218-238, 276-296, and 303-323; these read LAQF…VVYI, MLLF…YHII, FRYT…CIYI, LILA…IIWV, KATI…IGLF, AALM…YNFL, and TIAT…LVIV.

This sequence belongs to the nematode receptor-like protein srb family.

The protein resides in the membrane. This is Serpentine receptor class beta-18 (srb-18) from Caenorhabditis elegans.